The following is a 646-amino-acid chain: MIGAFKRNRGSSQSFAKECQPSTLKANLEVAKELPFSDRRDFEDATQGYIGSLSDEQIIGPDGGVVWCMKSYGFLEPETPANTVNPSLWRQAQLNAIHGLFKITDNVYQVRGLDISNMTIIEGNTSLIIIDTLFTTETAQESLKLYYRHRPQKPVRTVIYTHSHSDHYGGVKGIVKEADVKSGEVQIIAPVGFMESVVAENILAGNAMHRRSQYQFGMLLSPSVKGHVDCGIGKAASHGTVTLIAPTIIIEEPVEERTIDGVDFVFQLAPGSEAPSEMLIYMPQQRVLNMAEDVTHHMHNLYALRGVEVRDGNQWAKYIDAARVAFGSKTDVLIAQHHWPTTGQMRINELLKKQRDMYKFIHDQTLRLLNQGYTSRDIAETLRMPSSLEQEWSTRGYYGTLSHNVKAVYQKYLGWYDANPANLNPLPPVAYAKKAVEYMGGADAVLARAYKDFQKGEFRWVASVVNQLVFADPNNHQARELCADALEQLGYQAEASTWRNAYLVGAMELRQGVPKRRSTGKRNNIAVLNNEMFFDFLAVRLNATKAEGKIIVSNWCFINSNERFVITLENCALTYIQGWQTDADATITLKRTTFEALLANEITMVDFLRSKEVEIEGNRLRIEELLKLFDDFDQSFPVVEPMGGST.

Position 1 is an N-acetylmethionine (Met1). Zn(2+) contacts are provided by His162, His164, Asp166, His167, Glu273, Glu292, and His337.

This sequence belongs to the metallo-beta-lactamase superfamily. Type III sulfatase family. The cofactor is Zn(2+).

Alkyl/aryl-sulfatase. Enables the use of SDS and 4-nitrocatechol as sulfur source. In Saccharomyces cerevisiae (strain ATCC 204508 / S288c) (Baker's yeast), this protein is Alkyl/aryl-sulfatase BDS1 (BDS1).